The sequence spans 310 residues: Methionyl-tRNA formyltransferase (310 aa).

111-114 (SLLP) contributes to the (6S)-5,6,7,8-tetrahydrofolate binding site.

Belongs to the Fmt family.

It carries out the reaction L-methionyl-tRNA(fMet) + (6R)-10-formyltetrahydrofolate = N-formyl-L-methionyl-tRNA(fMet) + (6S)-5,6,7,8-tetrahydrofolate + H(+). Attaches a formyl group to the free amino group of methionyl-tRNA(fMet). The formyl group appears to play a dual role in the initiator identity of N-formylmethionyl-tRNA by promoting its recognition by IF2 and preventing the misappropriation of this tRNA by the elongation apparatus. This is Methionyl-tRNA formyltransferase from Afipia carboxidovorans (strain ATCC 49405 / DSM 1227 / KCTC 32145 / OM5) (Oligotropha carboxidovorans).